The sequence spans 341 residues: Peptidoglycan recognition protein 3 (341 aa).

An N-terminal signal peptide occupies residues 1-17 (MGTLPWLLAFFILGLQA). N-acetylmuramoyl-L-alanine amidase domains follow at residues 77-179 (TIGW…KVCP) and 200-325 (PAKY…ILSP). N-linked (GlcNAc...) asparagine glycosylation is present at asparagine 113. Intrachain disulfides connect cysteine 178/cysteine 300, cysteine 194/cysteine 238, and cysteine 214/cysteine 220. Peptidoglycan contacts are provided by histidine 231, arginine 235, and tyrosine 242. An interaction with murein region spans residues 264-269 (HTYGFN).

The protein belongs to the N-acetylmuramoyl-L-alanine amidase 2 family. In terms of assembly, monomer. Homodimer; disulfide-linked. Heterodimer with PGLYRP4; disulfide-linked. In terms of processing, N-glycosylated. Detected in skin epidermis, eccrine sweat glands and ducts, ciliary body epithelial cells of the eye, in small intestine, colon, stomach and in mature epithelial cells of the tongue (at protein level). Highly expressed in skin and esophagus, expressed also in tonsils and thymus and to a much lesser extent in the stomach, descending colon, rectum and brain.

The protein resides in the secreted. Functionally, pattern receptor that binds to murein peptidoglycans (PGN) of Gram-positive bacteria. Has bactericidal activity towards Gram-positive bacteria. May kill Gram-positive bacteria by interfering with peptidoglycan biosynthesis. Also binds to Gram-negative bacteria, and has bacteriostatic activity towards Gram-negative bacteria. Plays a role in innate immunity. The sequence is that of Peptidoglycan recognition protein 3 (PGLYRP3) from Homo sapiens (Human).